A 354-amino-acid polypeptide reads, in one-letter code: UDP-N-acetylglucosamine--N-acetylmuramyl-(pentapeptide) pyrophosphoryl-undecaprenol N-acetylglucosamine transferase (354 aa).

UDP-N-acetyl-alpha-D-glucosamine is bound by residues 15–17 (TGG), Asn127, Arg163, Ser191, Ile244, 263–268 (ALTVSE), and Gln288.

This sequence belongs to the glycosyltransferase 28 family. MurG subfamily.

The protein localises to the cell inner membrane. It catalyses the reaction di-trans,octa-cis-undecaprenyl diphospho-N-acetyl-alpha-D-muramoyl-L-alanyl-D-glutamyl-meso-2,6-diaminopimeloyl-D-alanyl-D-alanine + UDP-N-acetyl-alpha-D-glucosamine = di-trans,octa-cis-undecaprenyl diphospho-[N-acetyl-alpha-D-glucosaminyl-(1-&gt;4)]-N-acetyl-alpha-D-muramoyl-L-alanyl-D-glutamyl-meso-2,6-diaminopimeloyl-D-alanyl-D-alanine + UDP + H(+). It functions in the pathway cell wall biogenesis; peptidoglycan biosynthesis. Its function is as follows. Cell wall formation. Catalyzes the transfer of a GlcNAc subunit on undecaprenyl-pyrophosphoryl-MurNAc-pentapeptide (lipid intermediate I) to form undecaprenyl-pyrophosphoryl-MurNAc-(pentapeptide)GlcNAc (lipid intermediate II). The polypeptide is UDP-N-acetylglucosamine--N-acetylmuramyl-(pentapeptide) pyrophosphoryl-undecaprenol N-acetylglucosamine transferase (Aliivibrio fischeri (strain MJ11) (Vibrio fischeri)).